Consider the following 354-residue polypeptide: MTELKNDRYLRALLRQPVDVTPVWMMRQAGRYLPEYKATRAQAGDFMSLCKNAELACEVTLQPLRRYPLDAAILFSDILTVPDAMGLGLYFEAGEGPRFTSPVTCKADVDKLPIPDPEDELGYVMNAVRTIRRELKGEVPLIGFSGSPWTLATYMVEGGSSKAFTVIKKMMYADPQALHALLDKLAKSVALYLNAQIKAGAQAVMIFDTWGGVLTGRDYQQFSLYYMHKIVDGLLRENDGRRVPVTLFTKGGGQWLEAMAETGCDALGLDWTTDIADARRRVGNKVALQGNMDPSMLYAPPARIEEEVATILAGFGHGEGHVFNLGHGIHQDVPPEHAGVFVEAVHRLSEQYHR.

Substrate contacts are provided by residues 27–31 (RQAGR), F46, D77, Y154, T209, and H327.

The protein belongs to the uroporphyrinogen decarboxylase family. Homodimer.

The protein resides in the cytoplasm. The catalysed reaction is uroporphyrinogen III + 4 H(+) = coproporphyrinogen III + 4 CO2. It participates in porphyrin-containing compound metabolism; protoporphyrin-IX biosynthesis; coproporphyrinogen-III from 5-aminolevulinate: step 4/4. Functionally, catalyzes the decarboxylation of four acetate groups of uroporphyrinogen-III to yield coproporphyrinogen-III. This Escherichia coli O157:H7 protein is Uroporphyrinogen decarboxylase.